The chain runs to 239 residues: Lectin (239 aa).

Residues Asn-17 and Asn-113 are each glycosylated (N-linked (GlcNAc...) asparagine).

The protein belongs to the leguminous lectin family. In terms of assembly, homodimer.

Galactose and N-acetyllactosamine specific lectin. In Erythrina crista-galli (Cockspur coral tree), this protein is Lectin.